The sequence spans 358 residues: Zinc transporter ZIP1 (358 aa).

The Extracellular portion of the chain corresponds to 1–7; that stretch reads MDLLFAK. Residues 8-28 traverse the membrane as a helical segment; it reads IICIGIFLVVTTFGCFIPHLM. The Cytoplasmic portion of the chain corresponds to 29 to 53; that stretch reads GLYKEKENEEKNKRVKNILSNLNCF. Residues 54–74 form a helical membrane-spanning segment; the sequence is GSGFIFSIIMFHLLPETIHII. The Extracellular portion of the chain corresponds to 75–91; it reads SDHGNIRIFNTSDSQMK. A helical transmembrane segment spans residues 92-112; that stretch reads ILYIFFFVFIGFCMQLGLEYV. At 113–186 the chain is on the cytoplasmic side; the sequence is LPVDTNICCV…GKFLEILTLQ (74 aa). The chain crosses the membrane as a helical span at residues 187-207; the sequence is SFFLTISLAIHSCIEGMIIGT. The Extracellular portion of the chain corresponds to 208–213; that stretch reads STDVNY. Residues 214–234 traverse the membrane as a helical segment; the sequence is VFISSFCILLHKWIAGVTVSL. Residues 235–246 lie on the Cytoplasmic side of the membrane; it reads SLNSNNMNKTLK. Residues 247 to 267 form a helical membrane-spanning segment; it reads AILLLTFVFASPLGIVLGHMA. Over 268 to 273 the chain is Extracellular; the sequence is KSAGQK. A helical membrane pass occupies residues 274–294; the sequence is VTCLINAVSIGTLLFIGCEIL. Over 295-310 the chain is Cytoplasmic; that stretch reads LNEIKQNISRKVRLCK. A helical membrane pass occupies residues 311 to 331; it reads WLSFCFSCLIAFALISFTTSM. The Extracellular portion of the chain corresponds to 332–358; sequence APHTHGDIDTHVHVHHHDHDHDHGHNH.

It belongs to the ZIP transporter (TC 2.A.5) family. As to quaternary structure, homodimer.

It localises to the plastid. The protein resides in the apicoplast. The protein localises to the cell membrane. It carries out the reaction Zn(2+)(in) = Zn(2+)(out). The catalysed reaction is Fe(2+)(in) = Fe(2+)(out). Functionally, transporter for the divalent zinc cation. Mediates the influx of zinc into cells from extracellular space. Can transport divalent iron ions. Does not transport manganese and cadmium cations. This Plasmodium falciparum (isolate 3D7) protein is Zinc transporter ZIP1.